A 958-amino-acid polypeptide reads, in one-letter code: Glycine dehydrogenase (decarboxylating) (958 aa).

Lysine 708 carries the N6-(pyridoxal phosphate)lysine modification.

Belongs to the GcvP family. As to quaternary structure, the glycine cleavage system is composed of four proteins: P, T, L and H. Pyridoxal 5'-phosphate is required as a cofactor.

It catalyses the reaction N(6)-[(R)-lipoyl]-L-lysyl-[glycine-cleavage complex H protein] + glycine + H(+) = N(6)-[(R)-S(8)-aminomethyldihydrolipoyl]-L-lysyl-[glycine-cleavage complex H protein] + CO2. Functionally, the glycine cleavage system catalyzes the degradation of glycine. The P protein binds the alpha-amino group of glycine through its pyridoxal phosphate cofactor; CO(2) is released and the remaining methylamine moiety is then transferred to the lipoamide cofactor of the H protein. The polypeptide is Glycine dehydrogenase (decarboxylating) (Proteus mirabilis (strain HI4320)).